Reading from the N-terminus, the 473-residue chain is Photosystem II CP43 reaction center protein (473 aa).

A propeptide spanning residues 1–14 (MKTLYSLRRFYHVE) is cleaved from the precursor. The residue at position 15 (Thr-15) is an N-acetylthreonine. At Thr-15 the chain carries Phosphothreonine. 5 helical membrane-spanning segments follow: residues 69-93 (LFEV…PHLA), 134-155 (LLGP…KDRN), 178-200 (KALY…RKIT), 255-275 (KPFA…LSYS), and 291-312 (WFNN…ASQA). Glu-367 lines the [CaMn4O5] cluster pocket. The chain crosses the membrane as a helical span at residues 447–471 (RARAAAAGFEKGIDRDFEPVLSMTP).

The protein belongs to the PsbB/PsbC family. PsbC subfamily. In terms of assembly, PSII is composed of 1 copy each of membrane proteins PsbA, PsbB, PsbC, PsbD, PsbE, PsbF, PsbH, PsbI, PsbJ, PsbK, PsbL, PsbM, PsbT, PsbX, PsbY, PsbZ, Psb30/Ycf12, at least 3 peripheral proteins of the oxygen-evolving complex and a large number of cofactors. It forms dimeric complexes. Binds multiple chlorophylls and provides some of the ligands for the Ca-4Mn-5O cluster of the oxygen-evolving complex. It may also provide a ligand for a Cl- that is required for oxygen evolution. PSII binds additional chlorophylls, carotenoids and specific lipids. serves as cofactor.

The protein resides in the plastid. It localises to the chloroplast thylakoid membrane. In terms of biological role, one of the components of the core complex of photosystem II (PSII). It binds chlorophyll and helps catalyze the primary light-induced photochemical processes of PSII. PSII is a light-driven water:plastoquinone oxidoreductase, using light energy to abstract electrons from H(2)O, generating O(2) and a proton gradient subsequently used for ATP formation. This is Photosystem II CP43 reaction center protein from Nicotiana tabacum (Common tobacco).